The sequence spans 437 residues: Testis-specific Y-encoded-like protein 1 (437 aa).

Positions Met1–Pro81 are disordered. The span at Thr11–Ser26 shows a compositional bias: polar residues. Positions Gln28 to Ser40 are enriched in basic and acidic residues. Residue Lys156 forms a Glycyl lysine isopeptide (Lys-Gly) (interchain with G-Cter in SUMO2) linkage.

It belongs to the nucleosome assembly protein (NAP) family. Post-translationally, ubiquitinated by the CRL2(APPBP2) complex, which recognizes the Arg-Xaa-Xaa-Gly sequence at the C-terminus, leading to its degradation. Expressed in testis, ovary, liver, spleen, brain, kidney, prostate, lung, liver, and heart.

Its subcellular location is the nucleus. The protein localises to the nucleolus. This is Testis-specific Y-encoded-like protein 1 (TSPYL1) from Homo sapiens (Human).